Here is a 311-residue protein sequence, read N- to C-terminus: Ribosomal RNA small subunit methyltransferase H (311 aa).

S-adenosyl-L-methionine contacts are provided by residues 33–35 (AGH), Asp53, Phe80, Asp101, and Gln108.

The protein belongs to the methyltransferase superfamily. RsmH family.

It is found in the cytoplasm. It carries out the reaction cytidine(1402) in 16S rRNA + S-adenosyl-L-methionine = N(4)-methylcytidine(1402) in 16S rRNA + S-adenosyl-L-homocysteine + H(+). Its function is as follows. Specifically methylates the N4 position of cytidine in position 1402 (C1402) of 16S rRNA. The polypeptide is Ribosomal RNA small subunit methyltransferase H (Clostridioides difficile (strain 630) (Peptoclostridium difficile)).